The primary structure comprises 46 residues: Diuretic hormone class 1 (46 aa).

Ile-46 carries the isoleucine amide modification.

It localises to the secreted. Its function is as follows. Regulation of fluid secretion. Stimulates primary urine secretion by Malpighian tubules and causes a dose-dependent stimulation of cAMP levels in the tubules. Has a greater effect on the transport of Na(+) then K(+) ions. In vitro, has synergistic effects with the smaller diuretic hormone DH(31) which co-occurs with it. In Diploptera punctata (Pacific beetle cockroach), this protein is Diuretic hormone class 1.